We begin with the raw amino-acid sequence, 273 residues long: DnaJ homolog subfamily C member 27 (273 aa).

The segment at 1–18 (MEANMPKRKEPGRSLRIK) is required for interaction with MAPK1. Residues 23–30 (GNAEVGKS), 71–75 (DMAGH), and 134–137 (NKID) each bind GTP. A J domain is found at 217 to 273 (DSWDMLGVKPGASRDEVNKAYRKLAVLLHPDKCVAPGSEDAFKAVVNARTALLKNIK).

It belongs to the small GTPase superfamily. Rab family. As to quaternary structure, interacts directly with MAPK1 (wild-type and kinase-deficient forms). Interacts directly (in GTP-bound form) with MAP2K1 (wild-type and kinase-deficient forms). As to expression, overexpressed in gastrointestinal cancers; expression correlates with later tumor-node-metastasis stages of colorectal cancers.

The protein localises to the nucleus. Functionally, GTPase which can activate the MEK/ERK pathway and induce cell transformation when overexpressed. May act as a nuclear scaffold for MAPK1, probably by association with MAPK1 nuclear export signal leading to enhanced ERK1/ERK2 signaling. This is DnaJ homolog subfamily C member 27 (DNAJC27) from Homo sapiens (Human).